Reading from the N-terminus, the 205-residue chain is Small ribosomal subunit protein uS4 (205 aa).

The interval 14–49 is disordered; that stretch reads RMGENIWGRPKSPVNRREYGPGQHGQRRKGKMSDFG. The 64-residue stretch at 94–157 folds into the S4 RNA-binding domain; the sequence is SRLDAIVYRA…KQLVTVLEAV (64 aa).

Belongs to the universal ribosomal protein uS4 family. As to quaternary structure, part of the 30S ribosomal subunit. Contacts protein S5. The interaction surface between S4 and S5 is involved in control of translational fidelity.

Its function is as follows. One of the primary rRNA binding proteins, it binds directly to 16S rRNA where it nucleates assembly of the body of the 30S subunit. Functionally, with S5 and S12 plays an important role in translational accuracy. This is Small ribosomal subunit protein uS4 from Agrobacterium fabrum (strain C58 / ATCC 33970) (Agrobacterium tumefaciens (strain C58)).